The sequence spans 198 residues: Probable chemoreceptor glutamine deamidase CheD (198 aa).

Belongs to the CheD family.

It catalyses the reaction L-glutaminyl-[protein] + H2O = L-glutamyl-[protein] + NH4(+). In terms of biological role, probably deamidates glutamine residues to glutamate on methyl-accepting chemotaxis receptors (MCPs), playing an important role in chemotaxis. The polypeptide is Probable chemoreceptor glutamine deamidase CheD (Xanthomonas axonopodis pv. citri (strain 306)).